Here is a 304-residue protein sequence, read N- to C-terminus: Putative AraC-like transcription regulator (304 aa).

Residues 202-300 enclose the HTH araC/xylS-type domain; it reads ATALTCLHRD…GMPPGDYRKH (99 aa). 2 DNA-binding regions (H-T-H motif) span residues 219–240 and 267–290; these read ADLA…KATV and LASI…KRVL.

The chain is Putative AraC-like transcription regulator from Streptomyces lividans.